A 151-amino-acid chain; its full sequence is Aspartate carbamoyltransferase regulatory chain (151 aa).

Residues Cys107, Cys112, Cys135, and Cys138 each contribute to the Zn(2+) site.

This sequence belongs to the PyrI family. Contains catalytic and regulatory chains. Zn(2+) serves as cofactor.

Involved in allosteric regulation of aspartate carbamoyltransferase. This is Aspartate carbamoyltransferase regulatory chain from Psychromonas ingrahamii (strain DSM 17664 / CCUG 51855 / 37).